The following is a 314-amino-acid chain: tRNA dimethylallyltransferase (314 aa).

11–18 lines the ATP pocket; that stretch reads GPTASGKT. 13–18 contacts substrate; that stretch reads TASGKT. 4 interaction with substrate tRNA regions span residues 36–39, 160–164, 241–246, and 274–281; these read DSAL, QRINR, RCVGYR, and KRQITWLR.

It belongs to the IPP transferase family. Monomer. Mg(2+) serves as cofactor.

The catalysed reaction is adenosine(37) in tRNA + dimethylallyl diphosphate = N(6)-dimethylallyladenosine(37) in tRNA + diphosphate. In terms of biological role, catalyzes the transfer of a dimethylallyl group onto the adenine at position 37 in tRNAs that read codons beginning with uridine, leading to the formation of N6-(dimethylallyl)adenosine (i(6)A). The sequence is that of tRNA dimethylallyltransferase from Glaesserella parasuis serovar 5 (strain SH0165) (Haemophilus parasuis).